The sequence spans 334 residues: Syntaxin-18 (334 aa).

The Cytoplasmic segment spans residues 1–308 (MAVDITLLFR…EDIREAIKNN (308 aa)). Disordered stretches follow at residues 29-50 (GGAD…GDFS) and 166-225 (LSKL…GEDE). 3 stretches are compositionally biased toward basic and acidic residues: residues 33 to 50 (GSRD…GDFS), 166 to 186 (LSKL…EKSS), and 193 to 207 (SEEK…EKPL). Positions 242–304 (IGEMNSLFDE…KEGNEDIREA (63 aa)) constitute a t-SNARE coiled-coil homology domain. Residues 309 to 329 (AGFRVWILFFLVMCSFSLLFL) form a helical; Anchor for type IV membrane protein membrane-spanning segment. At 330-334 (DWYDS) the chain is on the vesicular side.

This sequence belongs to the syntaxin family. Component of a SNARE complex consisting of STX18, USE1L, BNIP1/SEC20L, and SEC22B. RINT1/TIP20L and ZW10 are associated with the complex through interaction with BNIP1/SEC20L. Interacts directly with USE1L and BNIP1/SEC20L.

The protein resides in the endoplasmic reticulum membrane. It localises to the golgi apparatus membrane. Syntaxin that may be involved in targeting and fusion of Golgi-derived retrograde transport vesicles with the ER. In Rattus norvegicus (Rat), this protein is Syntaxin-18 (Stx18).